A 72-amino-acid chain; its full sequence is Protein Kish (72 aa).

A signal peptide spans 1–26; the sequence is MSALFNFRSLLQVILLLICSCSYVHG. Residues 27–53 are Lumenal-facing; it reads QWPSLLDRYKNHEVLGAFWKMARVGER. The helical transmembrane segment at 54 to 72 threads the bilayer; it reads ASPYVSLACILMAISQFNS.

It belongs to the KISH family.

It localises to the endoplasmic reticulum membrane. The protein localises to the golgi apparatus membrane. Functionally, involved in the early part of the secretory pathway. The chain is Protein Kish from Saccharomyces cerevisiae (strain ATCC 204508 / S288c) (Baker's yeast).